Here is a 339-residue protein sequence, read N- to C-terminus: Dihydroorotate dehydrogenase (quinone) (339 aa).

FMN contacts are provided by residues 62-66 and Thr-86; that span reads AGLDK. Substrate is bound at residue Lys-66. 111–115 contributes to the substrate binding site; that stretch reads NRMGF. Asn-139 and Asn-172 together coordinate FMN. Position 172 (Asn-172) interacts with substrate. Ser-175 acts as the Nucleophile in catalysis. Asn-177 lines the substrate pocket. The FMN site is built by Lys-217 and Thr-245. 246–247 is a substrate binding site; that stretch reads NT. FMN is bound by residues Gly-268, Gly-297, and 318–319; that span reads YS.

It belongs to the dihydroorotate dehydrogenase family. Type 2 subfamily. As to quaternary structure, monomer. Requires FMN as cofactor.

The protein resides in the cell membrane. The enzyme catalyses (S)-dihydroorotate + a quinone = orotate + a quinol. Its pathway is pyrimidine metabolism; UMP biosynthesis via de novo pathway; orotate from (S)-dihydroorotate (quinone route): step 1/1. In terms of biological role, catalyzes the conversion of dihydroorotate to orotate with quinone as electron acceptor. The sequence is that of Dihydroorotate dehydrogenase (quinone) from Shewanella denitrificans (strain OS217 / ATCC BAA-1090 / DSM 15013).